Consider the following 388-residue polypeptide: Na(+)/H(+) antiporter NhaA (388 aa).

The Cytoplasmic segment spans residues 1 to 11 (MKHLHRFFSSD). Residues 12–31 (ASGGIILIIAAILAMIMANS) traverse the membrane as a helical segment. At 32–58 (GATSGWYHDFLETPVQLRVGSLEINKN) the chain is on the periplasmic side. Residues 45–58 (PVQLRVGSLEINKN) form an important for dimerization region. A helical membrane pass occupies residues 59-80 (MLLWINDALMAVFFLLVGLEVK). The Cytoplasmic segment spans residues 81 to 96 (RELMQGSLASLRQAAF). The chain crosses the membrane as a helical span at residues 97–116 (PVIAAIGGMIVPALLYLAFN). The Periplasmic segment spans residues 117–122 (YADPIT). A helical membrane pass occupies residues 123–130 (REGWAIPA). At 131 to 154 (ATDIAFALGVLALLGSRVPLALKI) the chain is on the cytoplasmic side. Residues 155 to 176 (FLMALAIIDDLGAIIIIALFYT) traverse the membrane as a helical segment. The Periplasmic segment spans residues 177–180 (NDLS). A helical membrane pass occupies residues 181-200 (MASLGVAAVAIAVLAVLNLC). Over 201 to 204 (GARR) the chain is Cytoplasmic. Residues 205–222 (TGVYILVGVVLWTAVLKS) traverse the membrane as a helical segment. G223 is a topological domain (periplasmic). A helical membrane pass occupies residues 224-236 (VHATLAGVIVGFF). Over 237 to 253 (IPLKEKHGRSPAKRLEH) the chain is Cytoplasmic. Residues 254 to 272 (VLHPWVAYLILPLFAFANA) traverse the membrane as a helical segment. Residues 273–286 (GVSLQGVTLDGLTS) lie on the Periplasmic side of the membrane. Residues 287–310 (ILPLGIIAGLLIGKPLGISLFCWL) form a helical membrane-spanning segment. At 311–339 (ALRLKLAHLPEGTTYQQIMVVGILCGIGF) the chain is on the cytoplasmic side. A helical membrane pass occupies residues 340 to 350 (TMSIFIASLAF). The Periplasmic portion of the chain corresponds to 351–357 (GSVDPEL). A helical membrane pass occupies residues 358 to 380 (INWAKLGILVGSISSAVIGYSWL). Residues 381–388 (RVRLRPSV) are Cytoplasmic-facing.

Belongs to the NhaA Na(+)/H(+) (TC 2.A.33) antiporter family. As to quaternary structure, monomer. Homodimer. Under routine stress conditions, the monomeric form is fully functional. However, the dimeric form is much more efficient in conferring growth resistance under extreme stress conditions.

It localises to the cell inner membrane. It carries out the reaction Na(+)(in) + 2 H(+)(out) = Na(+)(out) + 2 H(+)(in). It catalyses the reaction Li(+)(in) + 2 H(+)(out) = Li(+)(out) + 2 H(+)(in). Its activity is regulated as follows. Activity is regulated by pH. Active at alkaline pH. Activity is strongly down-regulated below pH 6.5 and a dramatic increase in activity is observed upon increase of the pH from 6.5 to 8.5. In terms of biological role, na(+)/H(+) antiporter that extrudes sodium in exchange for external protons. Plays an important role in the regulation of intracellular pH, cellular Na(+) content and cell volume. Catalyzes the exchange of 2 H(+) per Na(+). This stoichiometry applies at both neutral and alkaline pH values. In addition, can also transport lithium and is involved in lithium detoxification. Binding of the Li(+) and H(+) ligands to NhaA is coupled and antagonistic. In Escherichia coli (strain K12), this protein is Na(+)/H(+) antiporter NhaA.